A 142-amino-acid polypeptide reads, in one-letter code: Large ribosomal subunit protein uL13 (142 aa).

Belongs to the universal ribosomal protein uL13 family. Part of the 50S ribosomal subunit.

Its function is as follows. This protein is one of the early assembly proteins of the 50S ribosomal subunit, although it is not seen to bind rRNA by itself. It is important during the early stages of 50S assembly. In Pasteurella multocida (strain Pm70), this protein is Large ribosomal subunit protein uL13.